A 245-amino-acid chain; its full sequence is 4-hydroxy-tetrahydrodipicolinate reductase (245 aa).

Residues 7–12 (GAKGKV), 75–77 (GTT), and 102–105 (APNF) each bind NAD(+). Catalysis depends on His132, which acts as the Proton donor/acceptor. (S)-2,3,4,5-tetrahydrodipicolinate is bound at residue His133. The active-site Proton donor is Lys136. 142–143 (GT) serves as a coordination point for (S)-2,3,4,5-tetrahydrodipicolinate.

This sequence belongs to the DapB family.

The protein localises to the cytoplasm. It catalyses the reaction (S)-2,3,4,5-tetrahydrodipicolinate + NAD(+) + H2O = (2S,4S)-4-hydroxy-2,3,4,5-tetrahydrodipicolinate + NADH + H(+). It carries out the reaction (S)-2,3,4,5-tetrahydrodipicolinate + NADP(+) + H2O = (2S,4S)-4-hydroxy-2,3,4,5-tetrahydrodipicolinate + NADPH + H(+). The protein operates within amino-acid biosynthesis; L-lysine biosynthesis via DAP pathway; (S)-tetrahydrodipicolinate from L-aspartate: step 4/4. Its function is as follows. Catalyzes the conversion of 4-hydroxy-tetrahydrodipicolinate (HTPA) to tetrahydrodipicolinate. This Mycobacterium sp. (strain JLS) protein is 4-hydroxy-tetrahydrodipicolinate reductase.